Here is a 384-residue protein sequence, read N- to C-terminus: S-adenosylmethionine synthase (384 aa).

Residue His15 coordinates ATP. Asp17 is a Mg(2+) binding site. Glu43 is a binding site for K(+). The L-methionine site is built by Glu56 and Gln99. Residues 99–109 (QSPDINQGVDR) are flexible loop. ATP is bound by residues 164-166 (DAK), 231-232 (RF), Asp240, 246-247 (RK), Ala263, and Lys267. Position 240 (Asp240) interacts with L-methionine. Lys271 serves as a coordination point for L-methionine.

It belongs to the AdoMet synthase family. As to quaternary structure, homotetramer; dimer of dimers. Mg(2+) is required as a cofactor. The cofactor is K(+).

The protein localises to the cytoplasm. It carries out the reaction L-methionine + ATP + H2O = S-adenosyl-L-methionine + phosphate + diphosphate. The protein operates within amino-acid biosynthesis; S-adenosyl-L-methionine biosynthesis; S-adenosyl-L-methionine from L-methionine: step 1/1. Catalyzes the formation of S-adenosylmethionine (AdoMet) from methionine and ATP. The overall synthetic reaction is composed of two sequential steps, AdoMet formation and the subsequent tripolyphosphate hydrolysis which occurs prior to release of AdoMet from the enzyme. This Shewanella piezotolerans (strain WP3 / JCM 13877) protein is S-adenosylmethionine synthase.